Here is a 787-residue protein sequence, read N- to C-terminus: MAPAAGPRTGKHAKPQRSKTLKRKRGQEELSSLIQRVEDLDLKGIFKSFSDLPLSEPTASGLASSHYKTLTDIQSRAISHALKGRDILGAAKTGSGKTLAFLVPVLENLYRKQWAEHDGLGALILSPTRELAIQIFEVLRKIGRYHTFSAGLVIGGKSLKEEQERLGRMNILVCTPGRMLQHLDQTALFDTYNLQMLVLDEADRILDLGFQQTVDAIIGHLPKERQTLLFSATQTKKVSDLARLSLQDPEYVAVHETASSATPSKLQQHYVITPLPQKLDILWSFIRSNLKSKTMVFLSSGKQVRFVYESFRHLQPGIPLMHLHGRQKQGGRLDIVTRFSQSKHCVLFSTDVAARGLDFPAVDWVIQLDCPEDADTYIHRVGRTARYEREGRAVLFLDPSEEEGMLKRLEQKKVPIEKINIKANKQQSIKDQLQNMCFKDPELKYLGQKAFISYVKSVYIQKDKEIFKLKELKLDEFAASLGLPGAPRIKFIKGDDTKQRKNAPRAAAHLLSDDDDTDEEDGEKKSKKKEEPQVRTKYDRMFERRNQDVLAEHYSKLINDDGTMVAPNAGAGADADEDDDFLSVKRRFDAGDKDLGSSGDEDDESEKGNKKNVKVRREKLLKSKKKLLKFKGKGTKLVYDDEGNPHELYELEDEEQFKARGDAKDQQAKFLAEEAERTRLADMEDKEIAKQKRREKKEKRKARERELLAEAEEEETLVQLPPYEGDQDDEAPRPSKKPKVKFTEANDREEAEPWYKKSKKSSDQAAHTPRQIQTLEDLESLATGLLG.

A disordered region spans residues 1–28; sequence MAPAAGPRTGKHAKPQRSKTLKRKRGQE. Positions 9–25 are enriched in basic residues; sequence TGKHAKPQRSKTLKRKR. The Q motif motif lies at 47–75; that stretch reads KSFSDLPLSEPTASGLASSHYKTLTDIQS. In terms of domain architecture, Helicase ATP-binding spans 78-252; that stretch reads ISHALKGRDI…RLSLQDPEYV (175 aa). Position 91–98 (91–98) interacts with ATP; the sequence is AKTGSGKT. The DEAD box motif lies at 200–203; that stretch reads DEAD. Residues 278-437 form the Helicase C-terminal domain; sequence KLDILWSFIR…SIKDQLQNMC (160 aa). Disordered regions lie at residues 494–542, 560–579, 586–618, and 653–776; these read GDDT…DRMF, DDGTMVAPNAGAGADADEDD, RRFDAGDKDLGSSGDEDDESEKGNKKNVKVRRE, and DEEQ…QTLE. The segment covering 522–542 has biased composition (basic and acidic residues); the sequence is GEKKSKKKEEPQVRTKYDRMF. 2 stretches are compositionally biased toward basic and acidic residues: residues 586–595 and 656–690; these read RRFDAGDKDL and QFKARGDAKDQQAKFLAEEAERTRLADMEDKEIAK. The segment covering 691–700 has biased composition (basic residues); the sequence is QKRREKKEKR. Over residues 741-755 the composition is skewed to basic and acidic residues; sequence KFTEANDREEAEPWY.

This sequence belongs to the DEAD box helicase family. DDX10/DBP4 subfamily. As to quaternary structure, interacts with the U3 and U14 snoRNAs. Associates with pre-ribosomal complexes.

The protein localises to the nucleus. It is found in the nucleolus. The enzyme catalyses ATP + H2O = ADP + phosphate + H(+). ATP-dependent RNA helicase required for ribosome biogenesis. Involved in the release of U14 snoRNA in pre-ribosomal complexes. Required for pre-rRNA cleavage at site A2. This Aspergillus fumigatus (strain ATCC MYA-4609 / CBS 101355 / FGSC A1100 / Af293) (Neosartorya fumigata) protein is ATP-dependent RNA helicase dbp4 (dbp4).